Reading from the N-terminus, the 434-residue chain is MSNFSPREIVSELDRFIIGQKDAKRAVAIALRNRWRRQQLEGQMREEVMPKNILMIGPTGVGKTEISRRLAKLAGAPFVKVEATKFTEVGYVGRDVEQIIRDLVEIAITLVREKRREDVKAKAHLNAEERVLDALVGKTASPATRDSFRKKLRNGEMDDKEIEIEVSDSGASPNFEIPGMPGANIGVLNISDMLGKAMGGRTKTRKTTVKDSYPILINDESDKLLDQDQIVQEALRVSEDEGIVFIDEIDKIAAREGGSGAGVSREGVQRDLLPLVEGTTVATKYGPVKTDHILFITSGAFHVSKPSDLLPELQGRLPIRVELSALTREDFRRILTETEASLIKQYIALMETEEVKLEFSDDAIDALADIAVDLNATVENIGARRLQTVIEKVLDEISFTAPDKAGATFIIDAAYVKEKIGGLAKNTDLSRFIL.

ATP contacts are provided by residues Ile18, 60–65 (GVGKTE), Asp247, Glu312, and Arg384.

It belongs to the ClpX chaperone family. HslU subfamily. In terms of assembly, a double ring-shaped homohexamer of HslV is capped on each side by a ring-shaped HslU homohexamer. The assembly of the HslU/HslV complex is dependent on binding of ATP.

It is found in the cytoplasm. In terms of biological role, ATPase subunit of a proteasome-like degradation complex; this subunit has chaperone activity. The binding of ATP and its subsequent hydrolysis by HslU are essential for unfolding of protein substrates subsequently hydrolyzed by HslV. HslU recognizes the N-terminal part of its protein substrates and unfolds these before they are guided to HslV for hydrolysis. This chain is ATP-dependent protease ATPase subunit HslU, found in Brucella abortus (strain S19).